Reading from the N-terminus, the 398-residue chain is O-methyltransferase penC (398 aa).

Asp-263 serves as a coordination point for S-adenosyl-L-methionine. The active-site Proton acceptor is His-305.

The protein belongs to the class I-like SAM-binding methyltransferase superfamily. Cation-independent O-methyltransferase family.

It participates in secondary metabolite biosynthesis. It functions in the pathway alkaloid biosynthesis. Its pathway is mycotoxin biosynthesis. Functionally, O-methyltransferase; part of the gene cluster that mediates the biosynthesis of penigequinolones, potent insecticidal alkaloids that contain a highly modified 10-carbon prenyl group. The first stage is catalyzed by the nonribosomal peptide synthetase penN that condenses anthranilic acid and O-methyl-L-tyrosine to produce 4'-methoxycyclopeptin. 4'-methoxycyclopeptin is then converted to 4'-methoxydehydrocyclopeptin by the ketoglutarate-dependent dioxygenase penM through dehydrogenation to form a double bond between C-alpha and C-beta of the O-methyltyrosine side chain. PenM also converts its first product methoxydehydrocyclopeptin to 4'-methoxycyclopenin. The following conversion of 4'methoxycyclopenin into 4'-methoxyviridicatin is catalyzed by the cyclopenase penL. 4'-methoxyviridicatin is the precursor of quinolone natural products, and is further converted to quinolinone B. The prenyltransferase penI then catalyzes the canonical Friedel-Crafts alkylation of quinolinone B with dimethylallyl cation to yield dimethylallyl quinolone, which is subjected to FAD-dependent dehydrogenation by the FAD-linked oxidoreductase penH to yield conjugated aryl diene. The delta(3') double bond then serves as the site of the second alkylation with DMAPP catalyzed by the prenyltransferase penG to yield a carbenium ion intermediate, which can be attacked by H(2)O to yield a styrenyl quinolone containing a C3'-hydroxyprenyl chain, or undergo cyclization to yield yaequinolones J1 and J2. The conversion of the styrenyl quinolone into the tetrahydrofuran-containing yaequinolone C is performed by the FAD-dependent monooxygenase penE and involves epoxidation of the terminal C7'-C8' olefin, followed by epoxide ring opening initiated by the C3' hydroxyl group. The predicted cysteine hydrolase penJ acts as an epoxide hydrolase that enhances the rate of the 5-exo-tet cyclization step, increasing the yield of yaequinolone C. PenF catalyzes the cationic rearrangement of the epoxide formed by penE (before ring opening to produce yaequinolone C) into yaequinolone D. Finally, the short-chain dehydrogenase/reductase (SDR)-like reductase penD, catalyzes both the dehydration of yaequinolone D and the reduction of the resulting oxonium to yield penigequinolone. The polypeptide is O-methyltransferase penC (Penicillium thymicola).